Here is a 106-residue protein sequence, read N- to C-terminus: Flagellar transcriptional regulator FlhD (106 aa).

It belongs to the FlhD family. As to quaternary structure, homodimer; disulfide-linked. Forms a heterohexamer composed of two FlhC and four FlhD subunits. Each FlhC binds a FlhD dimer, forming a heterotrimer, and a hexamer assembles by dimerization of two heterotrimers.

It is found in the cytoplasm. Functions in complex with FlhC as a master transcriptional regulator that regulates transcription of several flagellar and non-flagellar operons by binding to their promoter region. Activates expression of class 2 flagellar genes, including fliA, which is a flagellum-specific sigma factor that turns on the class 3 genes. Also regulates genes whose products function in a variety of physiological pathways. In Burkholderia pseudomallei (strain 1710b), this protein is Flagellar transcriptional regulator FlhD.